We begin with the raw amino-acid sequence, 186 residues long: TATA box-binding protein-like 1 (186 aa).

Belongs to the TBP family.

The protein resides in the cytoplasm. It localises to the nucleus. Part of a specialized transcription system that mediates the transcription of most ribosomal proteins through the 5'-TCT-3' motif which is a core promoter element at these genes. Seems to also mediate the transcription of NF1. Does not bind the TATA box. Members of the TBP family are differentially required to regulate transcription and development during early embryogenesis. The sequence is that of TATA box-binding protein-like 1 from Danio rerio (Zebrafish).